The following is a 1343-amino-acid chain: DNA-directed RNA polymerase subunit beta (1343 aa).

The protein belongs to the RNA polymerase beta chain family. In terms of assembly, the RNAP catalytic core consists of 2 alpha, 1 beta, 1 beta' and 1 omega subunit. When a sigma factor is associated with the core the holoenzyme is formed, which can initiate transcription.

It carries out the reaction RNA(n) + a ribonucleoside 5'-triphosphate = RNA(n+1) + diphosphate. Its function is as follows. DNA-dependent RNA polymerase catalyzes the transcription of DNA into RNA using the four ribonucleoside triphosphates as substrates. The polypeptide is DNA-directed RNA polymerase subunit beta (Buchnera aphidicola subsp. Cinara cedri (strain Cc)).